The primary structure comprises 889 residues: Alanine--tRNA ligase (889 aa).

Zn(2+) is bound by residues H564, H568, C677, and H681.

It belongs to the class-II aminoacyl-tRNA synthetase family. It depends on Zn(2+) as a cofactor.

It localises to the cytoplasm. It carries out the reaction tRNA(Ala) + L-alanine + ATP = L-alanyl-tRNA(Ala) + AMP + diphosphate. Functionally, catalyzes the attachment of alanine to tRNA(Ala) in a two-step reaction: alanine is first activated by ATP to form Ala-AMP and then transferred to the acceptor end of tRNA(Ala). Also edits incorrectly charged Ser-tRNA(Ala) and Gly-tRNA(Ala) via its editing domain. The polypeptide is Alanine--tRNA ligase (Rhodopseudomonas palustris (strain ATCC BAA-98 / CGA009)).